A 301-amino-acid polypeptide reads, in one-letter code: Dimethylsulfoniopropionate lyase (301 aa).

Catalysis depends on proton donor/acceptor residues Cys-111 and Cys-230.

The protein belongs to the aspartate/glutamate racemases family. ALMA1 subfamily. In terms of assembly, homotetramer.

The catalysed reaction is S,S-dimethyl-beta-propiothetin = acrylate + dimethyl sulfide + H(+). Functionally, mediates cleavage of dimethylsulfoniopropionate (DMSP) into dimethyl sulfide (DMS) and acrylate. DMS is the principal form by which sulfur is transported from oceans to the atmosphere and is a key component of the ocean sulfur cycle. The protein is Dimethylsulfoniopropionate lyase of Durusdinium sp. clade D (Symbiodinium sp. clade D).